The sequence spans 196 residues: MTENTHAGRLIVLTGPTAVGKGTVEAKLRADHPEVWVSVSATTRAPRPGEVDGVNYWFLTEDEFLAREAAGEFLETAVVHGMAHYGTLLKPVEEHLAAGVPTILEIDLQGARRVKQRAAELDLEVVYVFIAPPSFEELERRLIGRGTETAEQQARRLETAKVELAAESEFDVTIVNETVDQAAADLWSVIAKEYGL.

The 184-residue stretch at glycine 8 to alanine 191 folds into the Guanylate kinase-like domain. Glycine 15–glycine 22 provides a ligand contact to ATP.

The protein belongs to the guanylate kinase family.

The protein localises to the cytoplasm. The catalysed reaction is GMP + ATP = GDP + ADP. Functionally, essential for recycling GMP and indirectly, cGMP. The chain is Guanylate kinase from Bifidobacterium longum (strain NCC 2705).